Here is a 747-residue protein sequence, read N- to C-terminus: Protein Niban 2 (747 aa).

Glycine 2 carries the N-myristoyl glycine lipid modification. A PH domain is found at 68-192 (RIIFSGNLFQ…WQAVLQDCVR (125 aa)). A phosphoserine mark is found at serine 568 and serine 574. A disordered region spans residues 589-747 (WGEQYGDGGD…EDSAGVQTEF (159 aa)). The segment covering 593–602 (YGDGGDGSDS) has biased composition (gly residues). Serine 605, serine 626, serine 641, serine 645, serine 648, serine 667, serine 672, serine 683, serine 693, and serine 697 each carry phosphoserine. The span at 708–722 (VDLEPPKPSDQETGE) shows a compositional bias: basic and acidic residues. Polar residues predominate over residues 734 to 747 (HTTTEDSAGVQTEF).

This sequence belongs to the Niban family. In terms of processing, as apoptosis proceeds, degraded via an proteasome-independent pathway, probably by caspases.

It localises to the cytoplasm. Its subcellular location is the cytosol. The protein localises to the cell junction. It is found in the adherens junction. The protein resides in the membrane. In terms of biological role, may play a role in apoptosis suppression. The chain is Protein Niban 2 from Rattus norvegicus (Rat).